The following is a 360-amino-acid chain: NAD(P)H-quinone oxidoreductase subunit 1, chloroplastic (360 aa).

The next 9 helical transmembrane spans lie at 27 to 47, 98 to 118, 129 to 149, 165 to 185, 203 to 223, 248 to 268, 269 to 289, 297 to 317, and 340 to 360; these read IWIFVPIFSLVLGIITGVLVI, FSIGPSIAVISILLSYSVIPF, IGIFLWIAISSIAPIGLLMSG, AAQSISYEIPLTLCVLSISLL, FWGWNLWRQPIGFIIFLISSL, YSGIKFGLFYVASYLNLLISS, LFVTVLYLGGWNISIPYISIL, IFGTTIGIFITLAKTYLFLFI, and FLLPISLGNLLLTTSFQLFSL.

It belongs to the complex I subunit 1 family. NDH is composed of at least 16 different subunits, 5 of which are encoded in the nucleus.

It localises to the plastid. Its subcellular location is the chloroplast thylakoid membrane. It catalyses the reaction a plastoquinone + NADH + (n+1) H(+)(in) = a plastoquinol + NAD(+) + n H(+)(out). It carries out the reaction a plastoquinone + NADPH + (n+1) H(+)(in) = a plastoquinol + NADP(+) + n H(+)(out). In terms of biological role, NDH shuttles electrons from NAD(P)H:plastoquinone, via FMN and iron-sulfur (Fe-S) centers, to quinones in the photosynthetic chain and possibly in a chloroplast respiratory chain. The immediate electron acceptor for the enzyme in this species is believed to be plastoquinone. Couples the redox reaction to proton translocation, and thus conserves the redox energy in a proton gradient. In Lepidium virginicum (Virginia pepperweed), this protein is NAD(P)H-quinone oxidoreductase subunit 1, chloroplastic.